The following is a 333-amino-acid chain: Adenosine deaminase (333 aa).

Positions 12 and 14 each coordinate Zn(2+). Substrate-binding residues include His-14 and Asp-16. Pentostatin contacts are provided by residues 14–16 (HLD), Ser-141, and Gly-170. Gly-170 is a binding site for substrate. Residue His-197 participates in Zn(2+) binding. Pentostatin is bound by residues Glu-200, His-221, and Asp-278. Glu-200 serves as the catalytic Proton donor. Asp-278 contributes to the Zn(2+) binding site. Position 279 (Asp-279) interacts with substrate.

It belongs to the metallo-dependent hydrolases superfamily. Adenosine and AMP deaminases family. Adenosine deaminase subfamily. Requires Zn(2+) as cofactor.

It carries out the reaction adenosine + H2O + H(+) = inosine + NH4(+). It catalyses the reaction 2'-deoxyadenosine + H2O + H(+) = 2'-deoxyinosine + NH4(+). Catalyzes the hydrolytic deamination of adenosine and 2-deoxyadenosine. The sequence is that of Adenosine deaminase from Salmonella typhimurium (strain LT2 / SGSC1412 / ATCC 700720).